A 254-amino-acid chain; its full sequence is Protein PET122, mitochondrial (254 aa).

A mitochondrion-targeting transit peptide spans 1 to 8 (MLTITKRL). An essential for PET122 function region spans residues 185–254 (QAAALALFGR…IKRRGFEINT (70 aa)).

Its subcellular location is the mitochondrion inner membrane. In terms of biological role, required for expression of the mitochondrial gene for cytochrome c oxidase subunit 3 (COX3). PET122 seems to work by directly interacting with the small ribosomal subunit to promote translation initiation on the COX3 mRNA. In Saccharomyces cerevisiae (strain ATCC 204508 / S288c) (Baker's yeast), this protein is Protein PET122, mitochondrial (PET122).